Here is a 55-residue protein sequence, read N- to C-terminus: Large ribosomal subunit protein bL33B (55 aa).

The protein belongs to the bacterial ribosomal protein bL33 family.

The sequence is that of Large ribosomal subunit protein bL33B from Mycolicibacterium paratuberculosis (strain ATCC BAA-968 / K-10) (Mycobacterium paratuberculosis).